A 150-amino-acid polypeptide reads, in one-letter code: Large ribosomal subunit protein bL9 (150 aa).

This sequence belongs to the bacterial ribosomal protein bL9 family.

In terms of biological role, binds to the 23S rRNA. The protein is Large ribosomal subunit protein bL9 of Pseudoalteromonas atlantica (strain T6c / ATCC BAA-1087).